Consider the following 448-residue polypeptide: Cytoplasmic tRNA 2-thiolation protein 2 (448 aa).

The protein belongs to the CTU2/NCS2 family.

Its subcellular location is the cytoplasm. Its pathway is tRNA modification; 5-methoxycarbonylmethyl-2-thiouridine-tRNA biosynthesis. In terms of biological role, plays a central role in 2-thiolation of mcm(5)S(2)U at tRNA wobble positions of tRNA(Lys), tRNA(Glu) and tRNA(Gln). May act by forming a heterodimer with NCS6 that ligates sulfur from thiocarboxylated URM1 onto the uridine of tRNAs at wobble position. Prior mcm(5) tRNA modification by the elongator complex is required for 2-thiolation. May also be involved in protein urmylation. The protein is Cytoplasmic tRNA 2-thiolation protein 2 of Scheffersomyces stipitis (strain ATCC 58785 / CBS 6054 / NBRC 10063 / NRRL Y-11545) (Yeast).